The sequence spans 160 residues: Phosphopantetheine adenylyltransferase (160 aa).

Serine 8 lines the substrate pocket. ATP is bound by residues 8 to 9 (SF) and histidine 16. Lysine 40, leucine 73, and lysine 87 together coordinate substrate. ATP-binding positions include 88–90 (GLR), glutamate 98, and 122–128 (YGYVSST).

It belongs to the bacterial CoaD family. As to quaternary structure, homohexamer. Mg(2+) serves as cofactor.

Its subcellular location is the cytoplasm. It carries out the reaction (R)-4'-phosphopantetheine + ATP + H(+) = 3'-dephospho-CoA + diphosphate. Its pathway is cofactor biosynthesis; coenzyme A biosynthesis; CoA from (R)-pantothenate: step 4/5. Reversibly transfers an adenylyl group from ATP to 4'-phosphopantetheine, yielding dephospho-CoA (dPCoA) and pyrophosphate. The chain is Phosphopantetheine adenylyltransferase from Corynebacterium glutamicum (strain R).